Consider the following 367-residue polypeptide: Aurora kinase (367 aa).

Polar residues-rich tracts occupy residues 1-29 (MQRNSLVNIKLNANSPSKKTTTRPNTSRI) and 37-48 (HSPQQRNPNSKI). The segment at 1 to 52 (MQRNSLVNIKLNANSPSKKTTTRPNTSRINKPWRISHSPQQRNPNSKIPSPV) is disordered. At serine 5 the chain carries Phosphoserine; by autocatalysis. A Phosphoserine modification is found at serine 76. One can recognise a Protein kinase domain in the interval 104 to 355 (FELGKKLGKG…LGDVKMHPWI (252 aa)). Residues 110-118 (LGKGKFGKV) and lysine 133 contribute to the ATP site. Residue aspartate 227 is the Proton acceptor of the active site. Threonine 260 carries the post-translational modification Phosphothreonine; by autocatalysis.

The protein belongs to the protein kinase superfamily. Ser/Thr protein kinase family. Aurora subfamily. As to quaternary structure, component of the CPC complex at least composed of IPL1, BIR1 and SLI15.

It is found in the nucleus. Its subcellular location is the cytoplasm. The protein resides in the cytoskeleton. It localises to the spindle. The protein localises to the chromosome. It is found in the centromere. Its subcellular location is the kinetochore. It carries out the reaction L-seryl-[protein] + ATP = O-phospho-L-seryl-[protein] + ADP + H(+). The catalysed reaction is L-threonyl-[protein] + ATP = O-phospho-L-threonyl-[protein] + ADP + H(+). Component of the chromosomal passenger complex (CPC), a complex that acts as a key regulator of chromosome segregation and cytokinesis. Has a role in error-correction of aberrent kinetochore-microtubule attachments to ensure that sister kinetochores become bioriented and connect to opposite poles by promoting spindle assembly checkpoint signaling. Acts in opposition to the phosphatase PP1. Not required for kinetochore detachment from microtubules during replication of centromeric DNA. Phosphorylates histone H3 to form H3S10ph during mitosis and meiosis. Phosphorylates CNN1, which contributes to the enrichment of CNN1 on anaphase kinetochores. Phosphorylates RGD1. This is Aurora kinase (IPL1) from Saccharomyces cerevisiae (strain ATCC 204508 / S288c) (Baker's yeast).